The chain runs to 245 residues: Small ribosomal subunit protein uS3 (245 aa).

One can recognise a KH type-2 domain in the interval 39 to 108 (IRNYIKKNYY…SVFVNVQEVK (70 aa)).

The protein belongs to the universal ribosomal protein uS3 family. As to quaternary structure, part of the 30S ribosomal subunit. Forms a tight complex with proteins S10 and S14.

Functionally, binds the lower part of the 30S subunit head. Binds mRNA in the 70S ribosome, positioning it for translation. In Dictyoglomus turgidum (strain DSM 6724 / Z-1310), this protein is Small ribosomal subunit protein uS3.